The sequence spans 356 residues: S-adenosylmethionine:tRNA ribosyltransferase-isomerase (356 aa).

Belongs to the QueA family. As to quaternary structure, monomer.

The protein localises to the cytoplasm. The catalysed reaction is 7-aminomethyl-7-carbaguanosine(34) in tRNA + S-adenosyl-L-methionine = epoxyqueuosine(34) in tRNA + adenine + L-methionine + 2 H(+). It participates in tRNA modification; tRNA-queuosine biosynthesis. Functionally, transfers and isomerizes the ribose moiety from AdoMet to the 7-aminomethyl group of 7-deazaguanine (preQ1-tRNA) to give epoxyqueuosine (oQ-tRNA). In Xanthomonas oryzae pv. oryzae (strain KACC10331 / KXO85), this protein is S-adenosylmethionine:tRNA ribosyltransferase-isomerase.